The sequence spans 105 residues: Small ribosomal subunit protein bS6 (105 aa).

This sequence belongs to the bacterial ribosomal protein bS6 family.

In terms of biological role, binds together with bS18 to 16S ribosomal RNA. This chain is Small ribosomal subunit protein bS6, found in Lawsonia intracellularis (strain PHE/MN1-00).